A 2290-amino-acid chain; its full sequence is Protein Ycf2 (2290 aa).

Residues 505–530 form a disordered region; that stretch reads GSNPTERSTRDQKSLKKQQDVSFVPP. Residues 511 to 523 show a composition bias toward basic and acidic residues; sequence RSTRDQKSLKKQQ. Residue 1639–1646 coordinates ATP; sequence GSIGTGRS.

Belongs to the Ycf2 family.

It is found in the plastid. Its subcellular location is the chloroplast stroma. In terms of biological role, probable ATPase of unknown function. Its presence in a non-photosynthetic plant (Epifagus virginiana) and experiments in tobacco indicate that it has an essential function which is probably not related to photosynthesis. The protein is Protein Ycf2 of Ceratophyllum demersum (Rigid hornwort).